The primary structure comprises 465 residues: Hexokinase-4 (465 aa).

The region spanning 10–454 is the Hexokinase domain; it reads ATKKEKVEQI…SGRGAALVSA (445 aa). The hexokinase small subdomain stretch occupies residues 67–203; it reads EGSEVGDFLS…DFEMDVVAMV (137 aa). Position 78-83 (78-83) interacts with ATP; sequence DLGGTN. Substrate is bound by residues 151–152, 168–169, and 204–205; these read SF, TK, and ND. The hexokinase large subdomain stretch occupies residues 204-443; it reads NDTVATMISC…CEITFIESEE (240 aa). Threonine 228 is a binding site for ATP. Substrate is bound by residues asparagine 231, glutamate 256, and glutamate 290. Residues 295-296, 332-336, and 411-415 each bind ATP; these read GK, TRFVS, and SVYKL.

The protein belongs to the hexokinase family. Monomer. Interacts with MIDN; the interaction occurs preferentially at low glucose levels and results in inhibition of hexokinase activity. Interacts with GCKR; leading to sequestration in the nucleus.

The protein resides in the cytoplasm. Its subcellular location is the nucleus. It is found in the mitochondrion. It catalyses the reaction a D-hexose + ATP = a D-hexose 6-phosphate + ADP + H(+). The catalysed reaction is D-fructose + ATP = D-fructose 6-phosphate + ADP + H(+). The enzyme catalyses D-glucose + ATP = D-glucose 6-phosphate + ADP + H(+). It carries out the reaction D-mannose + ATP = D-mannose 6-phosphate + ADP + H(+). The protein operates within carbohydrate metabolism; hexose metabolism. Its pathway is carbohydrate degradation; glycolysis; D-glyceraldehyde 3-phosphate and glycerone phosphate from D-glucose: step 1/4. Subject to allosteric regulation. Low glucose and high fructose-6-phosphate triggers association with the inhibitor GCKR followed by sequestration in the nucleus. In terms of biological role, catalyzes the phosphorylation of hexose, such as D-glucose, D-fructose and D-mannose, to hexose 6-phosphate (D-glucose 6-phosphate, D-fructose 6-phosphate and D-mannose 6-phosphate, respectively). Compared to other hexokinases, has a weak affinity for D-glucose, and is effective only when glucose is abundant. Mainly expressed in pancreatic beta cells and the liver and constitutes a rate-limiting step in glucose metabolism in these tissues. Since insulin secretion parallels glucose metabolism and the low glucose affinity of GCK ensures that it can change its enzymatic activity within the physiological range of glucose concentrations, GCK acts as a glucose sensor in the pancreatic beta cell. In pancreas, plays an important role in modulating insulin secretion. In liver, helps to facilitate the uptake and conversion of glucose by acting as an insulin-sensitive determinant of hepatic glucose usage. Required to provide D-glucose 6-phosphate for the synthesis of glycogen. Mediates the initial step of glycolysis by catalyzing phosphorylation of D-glucose to D-glucose 6-phosphate. In Mus musculus (Mouse), this protein is Hexokinase-4.